The primary structure comprises 423 residues: 3-phosphoshikimate 1-carboxyvinyltransferase (423 aa).

Lysine 19, serine 20, and arginine 24 together coordinate 3-phosphoshikimate. Lysine 19 contributes to the phosphoenolpyruvate binding site. Residues glycine 89 and arginine 118 each coordinate phosphoenolpyruvate. Residues serine 164, serine 165, glutamine 166, serine 192, aspartate 304, and lysine 331 each coordinate 3-phosphoshikimate. A phosphoenolpyruvate-binding site is contributed by glutamine 166. Residue aspartate 304 is the Proton acceptor of the active site. Phosphoenolpyruvate is bound by residues arginine 335 and arginine 377.

It belongs to the EPSP synthase family. As to quaternary structure, monomer.

The protein resides in the cytoplasm. It catalyses the reaction 3-phosphoshikimate + phosphoenolpyruvate = 5-O-(1-carboxyvinyl)-3-phosphoshikimate + phosphate. The protein operates within metabolic intermediate biosynthesis; chorismate biosynthesis. Functionally, catalyzes the transfer of the enolpyruvyl moiety of phosphoenolpyruvate (PEP) to the 5-hydroxyl of shikimate-3-phosphate (S3P) to produce enolpyruvyl shikimate-3-phosphate and inorganic phosphate. This chain is 3-phosphoshikimate 1-carboxyvinyltransferase, found in Korarchaeum cryptofilum (strain OPF8).